A 240-amino-acid chain; its full sequence is Pyridoxine 5'-phosphate synthase (240 aa).

Residue Asn-7 participates in 3-amino-2-oxopropyl phosphate binding. Residue 9–10 (DH) participates in 1-deoxy-D-xylulose 5-phosphate binding. Arg-18 is a binding site for 3-amino-2-oxopropyl phosphate. His-43 (proton acceptor) is an active-site residue. 1-deoxy-D-xylulose 5-phosphate-binding residues include Arg-45 and His-50. Residue Glu-70 is the Proton acceptor of the active site. A 1-deoxy-D-xylulose 5-phosphate-binding site is contributed by Thr-100. The active-site Proton donor is His-191. Residues Gly-192 and 213 to 214 (GH) contribute to the 3-amino-2-oxopropyl phosphate site.

This sequence belongs to the PNP synthase family. In terms of assembly, homooctamer; tetramer of dimers.

The protein resides in the cytoplasm. The catalysed reaction is 3-amino-2-oxopropyl phosphate + 1-deoxy-D-xylulose 5-phosphate = pyridoxine 5'-phosphate + phosphate + 2 H2O + H(+). It participates in cofactor biosynthesis; pyridoxine 5'-phosphate biosynthesis; pyridoxine 5'-phosphate from D-erythrose 4-phosphate: step 5/5. In terms of biological role, catalyzes the complicated ring closure reaction between the two acyclic compounds 1-deoxy-D-xylulose-5-phosphate (DXP) and 3-amino-2-oxopropyl phosphate (1-amino-acetone-3-phosphate or AAP) to form pyridoxine 5'-phosphate (PNP) and inorganic phosphate. The chain is Pyridoxine 5'-phosphate synthase from Crocosphaera subtropica (strain ATCC 51142 / BH68) (Cyanothece sp. (strain ATCC 51142)).